The primary structure comprises 215 residues: MVLLTMIARVADGLPLAASMQEDEQSGRDLQQYQSQAKQLFRKLNEQSPTRCTLGAGAMTFHYIIEQGVCYLVLCEAAFPKKLAFAYLEDLHSEFDEQHGKKVPTVSRPYSFIEFDTFIQKTKKLYIDSRARRNLGSINTELQDVQRIMVANIEEVLQRGEALSALDSKANNLSSLSKKYRQDAKYLNMRSTYAKLAAVAVFFIMLIVYVRFWWL.

Residues 1–194 (MVLLTMIARV…KYLNMRSTYA (194 aa)) lie on the Cytoplasmic side of the membrane. A Longin domain is found at 6–119 (MIARVADGLP…YSFIEFDTFI (114 aa)). Lysine 38 carries the N6-acetyllysine modification. The 61-residue stretch at 134–194 (NLGSINTELQ…KYLNMRSTYA (61 aa)) folds into the v-SNARE coiled-coil homology domain. Serine 137 carries the post-translational modification Phosphoserine. The residue at position 140 (threonine 140) is a Phosphothreonine. A phosphoserine mark is found at serine 164, serine 168, serine 174, and serine 177. A helical; Anchor for type IV membrane protein membrane pass occupies residues 195–215 (KLAAVAVFFIMLIVYVRFWWL).

Belongs to the synaptobrevin family. Interacts with STX17. Component of two distinct SNARE complexes consisting of STX5, GOSR2/BOS1, BET1 and SEC22B or STX18, USE1L, BNIP1/SEC20L and SEC22B. YKT6 can probably replace SEC22B as subunit of either complex. Interacts with the COPII Sec23/24 complex composed of SEC23A and SEC24A; recruits SEC22B into COPII-coated vesicles to allow its transport from the endoplasmic reticulum to the Golgi. Interacts with BET1.

It localises to the endoplasmic reticulum membrane. The protein resides in the endoplasmic reticulum-Golgi intermediate compartment membrane. The protein localises to the golgi apparatus. It is found in the cis-Golgi network membrane. Its subcellular location is the trans-Golgi network membrane. It localises to the melanosome. Functionally, SNARE involved in targeting and fusion of ER-derived transport vesicles with the Golgi complex as well as Golgi-derived retrograde transport vesicles with the ER. This is Vesicle-trafficking protein SEC22b (Sec22b) from Cricetulus griseus (Chinese hamster).